The primary structure comprises 250 residues: MEMVEEHIKGILKNRKIHFTLIDPDEQTPQEALEIAEEAILGGTDGIMIGGSTVNNDEVDETCKILSENIEVPIILFPGNINSVSKYADAIFFMSYLNSTNPYWIYGAQALAAPIVRQAGIEVLPMGYMVVQPGGTVGWVGDAKLVPRNKPKIPAAYAMSAELLGMRFFYIEAGSGADKPIPPEMVGYTKKATEDMVIIVGGGIRDGEAAYTAAKAGGDIIVTGTVVEETNDVRGKIEEITAAIRKASIE.

Positions 23 and 52 each coordinate Mg(2+). Residues 170–176 (YIEAGSG), 202–203 (GG), and 224–225 (GT) contribute to the sn-glycerol 1-phosphate site.

Belongs to the GGGP/HepGP synthase family. Group II subfamily. Requires Mg(2+) as cofactor.

The protein localises to the cytoplasm. The catalysed reaction is sn-glycerol 1-phosphate + (2E,6E,10E)-geranylgeranyl diphosphate = sn-3-O-(geranylgeranyl)glycerol 1-phosphate + diphosphate. Its pathway is membrane lipid metabolism; glycerophospholipid metabolism. In terms of biological role, prenyltransferase that catalyzes the transfer of the geranylgeranyl moiety of geranylgeranyl diphosphate (GGPP) to the C3 hydroxyl of sn-glycerol-1-phosphate (G1P). This reaction is the first ether-bond-formation step in the biosynthesis of archaeal membrane lipids. This chain is Geranylgeranylglyceryl phosphate synthase, found in Methanobrevibacter smithii (strain ATCC 35061 / DSM 861 / OCM 144 / PS).